A 392-amino-acid polypeptide reads, in one-letter code: Ceramide phosphoethanolamine synthase (392 aa).

The Lumenal segment spans residues 1 to 10 (MIGPSSQISK). Residues 11–31 (ILLTLLFLLIIFYVFMDVELY) form a helical membrane-spanning segment. The Cytoplasmic segment spans residues 32–140 (LRIHNYAIER…MFDNVIGFSR (109 aa)). Residues 59–82 (SESGSGSIGGSSSSSSSSSSSTST) show a composition bias toward low complexity. The tract at residues 59 to 91 (SESGSGSIGGSSSSSSSSSSSTSTKLPTAGDRQ) is disordered. A helical membrane pass occupies residues 141–161 (STFITPNMISFFHVGVACLAG). The Lumenal portion of the chain corresponds to 162 to 212 (KLVASDSLGYRRLGVLLFQIRTFLDDLDGHVARVRKHIRGERSEIGTSGYY). A helical transmembrane segment spans residues 213–233 (VDGLCDGLGCIALLLGIFFYL). Topologically, residues 234–271 (KNNPPRRGYSIIPMSDSKLPEPTMMIPKMKATTRKVAK) are cytoplasmic. A helical membrane pass occupies residues 272 to 288 (NVISFTGQLLLSSTAWN). Topologically, residues 289 to 319 (RYIAVYQNMLEREDVSGNQSHCQDYVFKSTW) are lumenal. Residues 320–340 (FFCVAWMWRIVNVHALLHCVL) form a helical membrane-spanning segment. Topologically, residues 341 to 356 (LSIFCDKLWDFLRAIR) are cytoplasmic. Residues 357 to 377 (YSGYIILLVAICLTEMHILEA) form a helical membrane-spanning segment. The Lumenal portion of the chain corresponds to 378–392 (QNYIFNSTACSNISL).

Belongs to the CDP-alcohol phosphatidyltransferase class-I family. The cofactor is Mn(2+).

The protein localises to the membrane. The protein resides in the golgi apparatus membrane. Its subcellular location is the cell membrane. The enzyme catalyses CDP-ethanolamine + an N-acylsphing-4-enine = an N-acylsphing-4-enine 1-phosphoethanolamine + CMP + H(+). It catalyses the reaction CDP-ethanolamine + an N-acyl-sphingoid base = an N-acyl-sphingoid 1-phosphoethanolamine + CMP + H(+). Catalyzes the biosynthesis of ceramide phosphoethanolamine (CPE) through the transfer of a phosphatidyl head group from cytidine 5'-diphosphate (CDP)-ethanolamine on to the primary hydroxyl of ceramide. The sequence is that of Ceramide phosphoethanolamine synthase from Drosophila melanogaster (Fruit fly).